A 476-amino-acid polypeptide reads, in one-letter code: Argininosuccinate lyase (476 aa).

The protein belongs to the lyase 1 family. Argininosuccinate lyase subfamily.

Its subcellular location is the cytoplasm. It carries out the reaction 2-(N(omega)-L-arginino)succinate = fumarate + L-arginine. It functions in the pathway amino-acid biosynthesis; L-arginine biosynthesis; L-arginine from L-ornithine and carbamoyl phosphate: step 3/3. The protein is Argininosuccinate lyase of Gluconacetobacter diazotrophicus (strain ATCC 49037 / DSM 5601 / CCUG 37298 / CIP 103539 / LMG 7603 / PAl5).